The primary structure comprises 255 residues: MILNKALLLGALALTAVMSPCGGEDIVADHVASYGVNFYQSHGPSGQYTHEFDGDEEFYVDLETKETVWQLPMFSKFISFDPQSALRNMAVGKHTLEFMMRQSNSTAATNEVPEVTVFSKFPVTLGQPNTLICLVDNIFPPVVNITWLSNGHSVTEGVSETSFLSKSDHSFFKISYLTFLPSADEIYDCKVEHWGLDEPLLKHWEPEIPAPMSELTETLVCALGLSVGLMGIVVGTVFIIQGLRSVGASRHQGLL.

The first 23 residues, 1–23 (MILNKALLLGALALTAVMSPCGG), serve as a signal peptide directing secretion. The interval 24–110 (EDIVADHVAS…RQSNSTAATN (87 aa)) is alpha-1. Over 24–217 (EDIVADHVAS…IPAPMSELTE (194 aa)) the chain is Extracellular. Residues Asn104 and Asn144 are each glycosylated (N-linked (GlcNAc...) asparagine). Residues 111-204 (EVPEVTVFSK…GLDEPLLKHW (94 aa)) form an alpha-2 region. The Ig-like C1-type domain occupies 113 to 205 (PEVTVFSKFP…LDEPLLKHWE (93 aa)). Cys133 and Cys189 form a disulfide bridge. The connecting peptide stretch occupies residues 205 to 217 (EPEIPAPMSELTE). A helical transmembrane segment spans residues 218 to 240 (TLVCALGLSVGLMGIVVGTVFII). The Cytoplasmic portion of the chain corresponds to 241–255 (QGLRSVGASRHQGLL).

The protein belongs to the MHC class II family. In terms of assembly, heterodimer of an alpha and a beta subunit; also referred as MHC class II molecule. Dimer formation with HLA-DQB2, but not with HLA-DQB1, is required for efficient exit from the endoplasmic reticulum (ER). In the ER, forms a heterononamer; 3 MHC class II molecules bind to a CD74 homotrimer (also known as invariant chain or HLA class II histocompatibility antigen gamma chain). In the endosomal/lysosomal system; CD74 undergoes sequential degradation by various proteases; leaving a small fragment termed CLIP on each MHC class II molecule. MHC class II molecule interacts with HLA_DM, and HLA_DO in B-cells, in order to release CLIP and facilitate the binding of antigenic peptides. Association with HLA-DMA also occurs in skin Langerhans cells, in post-Golgi compartments. In terms of tissue distribution, restricted to skin Langerhans cells, although some expression at low levels may occur at the surface of B lymphoblastoid cells.

It is found in the cell membrane. The protein resides in the endoplasmic reticulum membrane. The protein localises to the golgi apparatus. It localises to the trans-Golgi network membrane. Its subcellular location is the endosome membrane. It is found in the lysosome membrane. In terms of biological role, binds peptides derived from antigens that access the endocytic route of antigen presenting cells (APC) and presents them on the cell surface for recognition by the CD4 T-cells. The peptide binding cleft accommodates peptides of 10-30 residues. The peptides presented by MHC class II molecules are generated mostly by degradation of proteins that access the endocytic route, where they are processed by lysosomal proteases and other hydrolases. Exogenous antigens that have been endocytosed by the APC are thus readily available for presentation via MHC II molecules, and for this reason this antigen presentation pathway is usually referred to as exogenous. As membrane proteins on their way to degradation in lysosomes as part of their normal turn-over are also contained in the endosomal/lysosomal compartments, exogenous antigens must compete with those derived from endogenous components. Autophagy is also a source of endogenous peptides, autophagosomes constitutively fuse with MHC class II loading compartments. In addition to APCs, other cells of the gastrointestinal tract, such as epithelial cells, express MHC class II molecules and CD74 and act as APCs, which is an unusual trait of the GI tract. To produce a MHC class II molecule that presents an antigen, three MHC class II molecules (heterodimers of an alpha and a beta chain) associate with a CD74 trimer in the ER to form a heterononamer. Soon after the entry of this complex into the endosomal/lysosomal system where antigen processing occurs, CD74 undergoes a sequential degradation by various proteases, including CTSS and CTSL, leaving a small fragment termed CLIP (class-II-associated invariant chain peptide). The removal of CLIP is facilitated by HLA-DM via direct binding to the alpha-beta-CLIP complex so that CLIP is released. HLA-DM stabilizes MHC class II molecules until primary high affinity antigenic peptides are bound. The MHC II molecule bound to a peptide is then transported to the cell membrane surface. In B-cells, the interaction between HLA-DM and MHC class II molecules is regulated by HLA-DO. Primary dendritic cells (DCs) also to express HLA-DO. Lysosomal microenvironment has been implicated in the regulation of antigen loading into MHC II molecules, increased acidification produces increased proteolysis and efficient peptide loading. The protein is HLA class II histocompatibility antigen, DQ alpha 2 chain (HLA-DQA2) of Homo sapiens (Human).